The chain runs to 858 residues: DNA mismatch repair protein MutS (858 aa).

613–620 lines the ATP pocket; it reads GPNMAGKS.

This sequence belongs to the DNA mismatch repair MutS family.

In terms of biological role, this protein is involved in the repair of mismatches in DNA. It is possible that it carries out the mismatch recognition step. This protein has a weak ATPase activity. In Dehalococcoides mccartyi (strain ATCC BAA-2100 / JCM 16839 / KCTC 5957 / BAV1), this protein is DNA mismatch repair protein MutS.